We begin with the raw amino-acid sequence, 348 residues long: Flagellar P-ring protein (348 aa).

Positions 1 to 16 are cleaved as a signal peptide; sequence MRIFLLCLALSLSVFA.

The protein belongs to the FlgI family. The basal body constitutes a major portion of the flagellar organelle and consists of four rings (L,P,S, and M) mounted on a central rod.

The protein resides in the periplasm. Its subcellular location is the bacterial flagellum basal body. In terms of biological role, assembles around the rod to form the L-ring and probably protects the motor/basal body from shearing forces during rotation. In Campylobacter lari (strain RM2100 / D67 / ATCC BAA-1060), this protein is Flagellar P-ring protein.